The following is a 602-amino-acid chain: Protein NRT1/ PTR FAMILY 5.7 (602 aa).

The next 2 helical transmembrane spans lie at 56-73 and 87-107; these read LSYFGISTNLVVYLTTIL and WSGVTTLMPLLGGFVADAYLG. The residue at position 111 (threonine 111) is a Phosphothreonine. The next 10 helical transmembrane spans lie at 112–132, 152–172, 197–217, 220–240, 337–357, 381–401, 422–442, 465–485, 500–520, and 548–568; these read VLLATTIYLMGLILLTLSWFI, IAFFIAIYLISIGTGGHKPSL, WWNAGLCAGILTAVTVIVYIE, IGWGVASIILTIVMATSFFIF, VKLLINMIPIWFFTLAFGVCA, IVPPASLFSLIALSIIITVTI, ILQRIGVGMVFSLFAMIIAAL, IWLAPQFLVLGVADAFTLVGL, LGIAFYLSVLGAASFVNNLLI, and FYWMLAALTAANICCFVIVAM.

Belongs to the major facilitator superfamily. Proton-dependent oligopeptide transporter (POT/PTR) (TC 2.A.17) family. As to expression, expressed in shoots, stems, leaves and flowers.

The protein resides in the membrane. This Arabidopsis thaliana (Mouse-ear cress) protein is Protein NRT1/ PTR FAMILY 5.7 (NPF5.7).